Consider the following 158-residue polypeptide: Large ribosomal subunit protein uL30 (158 aa).

It belongs to the universal ribosomal protein uL30 family. In terms of assembly, part of the 50S ribosomal subunit.

In Sulfurisphaera tokodaii (strain DSM 16993 / JCM 10545 / NBRC 100140 / 7) (Sulfolobus tokodaii), this protein is Large ribosomal subunit protein uL30.